The following is a 558-amino-acid chain: Chaperonin GroEL 1 (558 aa).

Residues 29 to 32 (TLGP), 86 to 90 (DGTTT), Gly-413, and Asp-494 each bind ATP.

It belongs to the chaperonin (HSP60) family. As to quaternary structure, forms a cylinder of 14 subunits composed of two heptameric rings stacked back-to-back. Interacts with the co-chaperonin GroES.

It localises to the cytoplasm. The catalysed reaction is ATP + H2O + a folded polypeptide = ADP + phosphate + an unfolded polypeptide.. Functionally, together with its co-chaperonin GroES, plays an essential role in assisting protein folding. The GroEL-GroES system forms a nano-cage that allows encapsulation of the non-native substrate proteins and provides a physical environment optimized to promote and accelerate protein folding. The chain is Chaperonin GroEL 1 from Acaryochloris marina (strain MBIC 11017).